Here is a 626-residue protein sequence, read N- to C-terminus: TVADKQARLMPLFKHLTALTREKLPLDQRDERLKGVGILPRGTLFSCFHARHLAEATELYVALYGAKDFNDFIHLCEQARQIVNEGMFVYAVSVAVLHREDCKGITVPPIQEVFPDRFVPAETINRANKEASNHPDQQSIVVEAEETGNILDPEYKLSYFREDIGINAHHWHWHIVYPATWNPTVMGKEKDRKGELFFYMHQQMCARYDSERLSNGLQRMIPFHNFDEPLEGYAPHLTSLVSGLQYASRPEGYSIHDLSDVDVQDMVRWRERILDAINMHYIVDKDNNKIPLDIEHGTDILGDIIESSDESKNVEYYGSLHNWGHVMMANITDPDHRFQENPGVMSDTSTSLRDPIFYRWHRFIDNIFQEHKKSFHPYTKEELSFPGVEVVGVSINSKTANVITTLIKESLLELSHGINFGTDQSVKVKYHHLDHEPFTYNIVVENNSGAEKHSTVRIFLAPKYDELNNKLEPDEQRRLFIELDKFFYTLTPGKNTIVRNHQDSSVTISKVRTFDQLGAGEGVSEDSTEYCSCGWPEHMLIPRGSHKGMEFELFVMLTDHDEDTVAGLSENAVCSDAVSYCGARDDRYPDKKAMGFPFDRKIEARTAAEFLTPNMGLTDIKIKFHG.

Positions 170, 174, 201, 321, 325, and 361 each coordinate Cu cation. Position 374 is a phosphoserine (Ser374).

Belongs to the tyrosinase family. Hemocyanin subfamily. In terms of assembly, scorpion hemocyanin is a 24-chain polymer with 8 different chains identified, assembled in hexameric substructures. In terms of processing, three disulfide bonds are present. As to expression, hemolymph.

The protein resides in the secreted. It is found in the extracellular space. In terms of biological role, hemocyanins are copper-containing oxygen carriers occurring freely dissolved in the hemolymph of many mollusks and arthropods. The chain is Hemocyanin AA6 chain from Androctonus australis (Sahara scorpion).